Reading from the N-terminus, the 1914-residue chain is MAQSDVAAVWNPALRSDDNATPVPTGPASLEIDTSIEATTIPLGSPMETPHEYSISDIAFPDSDTAAPPQEAASPDMIDTEPLPNPDQIPARDEVLEAPSADVEATPEISYDHETPNLDAPQTEHAHDNEAMPLDDPEDQVTEAQPAQPQAEDSISTEATAAQDMDVEEQSSTPHAGDQDGTEPADTNGEAHSSHDIWGSPAKENSAEDDFFNQLKTQTKPIYVPPENESRFEEGVPLLDDSAESPVEPTATQEGQIDNLFTDDNDEDDGFFKAVQSSPPPDKSQPASHITRKSTFQVMDSLGFSLDSPMSDADPAAQEFDNALAAATTNNSVGISAFEEDPAAQEFDNVLAAAATDNSADKPSSEEDPAAQELDNVLAAATTNNSVGISAFEEDPAAQEFDNVLAAAATDNTVRKSSSEEDLAARWQAELAEEEAEVAPSEDDLAARWQMELDDDDDLLLEDDIGGATAEHAPTSQNINGATAGAAVPGLSSPFGTPQSSVRPGAPATAYTPHQPSTSDLLQGVPVPGAAPPANMAASADYFTQPPRPNVTANKAESFAERAKEGYRSPYDLPEDLTRPRRPVASHKPVVTQPGSTPPPPRSNSIPIPPPSTSMPPPPLGAQPDGAQSTAKVAAPKNFYEELPLPPPRPQSRPASSGRYTPGANAMPPASSHPPPPPANPYASLSTAPPAAAEAYSQPQVQQPEGLDPYASLSAPGASSGPAPPSATSRYSPKPPTLQAGIKPPPSPRYSPAPPPATAPPPRNRYASQPTAPPSQGVALPFQPRTSSPLAYHEKVSYRPQEPSEQQPSAMEQPAIIPPIEVQSQPTAPAEYSPIQPPEVPHVPEAVNMGSSVHQMSQQPMSPPRNQYAPPGYVDEFSKRIAPIANVPPAPVLPADDPTFVPPRRSMTQSPSQQTLGPRLSVPSVDPLQRPASVHGAGSPTKAVNPYAPAQMSAHNRVASQSLEFIPPTDDQQFDPLERWKGAPIVKFGFGGSVLSCFPKHIPRYSAGQATPKIKSTPGEVKTHQLSDWIPVPDTIARHPGPLKSKSKKKDLLAWLSSKIAAFENEGIPQAVYMHADSQKRSEEKILLWKVVRVLVEHDGVLEGSPEIQKSLRQIIFPHLQDVDSAQPYGNGLPSFSTAQSLDAPSRPDAADPQAVESIRNNLLVGEREKAVWGAVDHRLWGHAMIIASTMDKSVWKQVVQEFVRREVRSASGNTESLAALYEIFAGNVEESVDELVPPSARAGLQMVSKVDGHGTSKNALDGLDSWRDTLGLVLSNRSSEDYQALLALGRLLQSYGRTEAAHICFIFSRAAVFGGVDDPQASVVLLGADHQHLSLAALQDEDSILLTEAYEYATSVLSASPKPPLPHLLAFKLVYAWSLADQGRKSEAQQYCDAIAATLKATTKPSPYQHQHLYFGVDELSARLRQTTSDGGSSWISRPSMEKVSGSMWAKFNSFVAGEDNEAGSAGSAKAGDGDIGPFAKIAGTPTVSRSPSVSDIYGSYSAQPSYSSGPSRYQPNNQYAPTSSPEQLRGRSSLDSQRSSSYGFGFGQRRGSQEPSTPVESNMYQGGMLYNSPPAVGYQSTPPQTSYMPLAPVKEDLAPQAHAEASAGPVEQSYGSGSPYQPAGYGSFDQPFMNQVPSDGAGYMPPGVSSGYEPPAIESHPEPVAAPSEEVNEEEPAKKKSFMDDDDDDDIAARAAAIQKAERARKDREADEAFRKAAEADAQKPAPAKKSWFGGWFGGAAGGKKEDLNPNKPIRAKLGEENSFYYDKDLKKWVNKKDPNSATAARATPPPPRASGPPSRTASGSSAAPPPPASASPMMPPPSSRPPSTTGMPPPGSPAPSSLGVPPPSIQRSVSTGAAVSTPPSGLAAPPRPATSLSNASSIDDLLGAPTARKGAAAKGKKKGRYVDVMAK.

Disordered regions lie at residues 1-31 (MAQSDVAAVWNPALRSDDNATPVPTGPASLE) and 58-294 (IAFP…TRKS). Basic and acidic residues predominate over residues 110 to 130 (SYDHETPNLDAPQTEHAHDNE). 2 stretches are compositionally biased toward polar residues: residues 142 to 160 (TEAQPAQPQAEDSISTEAT) and 285 to 294 (QPASHITRKS). Repeat copies occupy residues 315-341 (PAAQEFDNALAAATTNNSVGISAFEED), 342-368 (PAAQEFDNVLAAAATDNSADKPSSEED), 369-395 (PAAQELDNVLAAATTNNSVGISAFEED), and 396-422 (PAAQEFDNVLAAAATDNTVRKSSSEED). A 4 X 27 AA approximate tandem repeats region spans residues 315–422 (PAAQEFDNAL…TVRKSSSEED (108 aa)). A disordered region spans residues 352 to 376 (AAAATDNSADKPSSEEDPAAQELDN). 4 disordered regions span residues 469 to 873 (TAEH…PPGY), 1506 to 1568 (PSYS…MYQG), 1600 to 1763 (APQA…LGEE), and 1776 to 1914 (VNKK…VMAK). Residues 512–521 (TPHQPSTSDL) are compositionally biased toward polar residues. Residues 526-540 (PVPGAAPPANMAASA) show a composition bias toward low complexity. The segment covering 558–567 (SFAERAKEGY) has biased composition (basic and acidic residues). 2 stretches are compositionally biased toward pro residues: residues 596–621 (STPPPPRSNSIPIPPPSTSMPPPPLG) and 671–680 (SSHPPPPPAN). Positions 709-721 (PYASLSAPGASSG) are enriched in low complexity. The span at 743–763 (KPPPSPRYSPAPPPATAPPPR) shows a compositional bias: pro residues. 2 stretches are compositionally biased toward polar residues: residues 849–860 (MGSSVHQMSQQP) and 1506–1528 (PSYSSGPSRYQPNNQYAPTSSPE). Low complexity predominate over residues 1532–1543 (GRSSLDSQRSSS). The segment covering 1555–1566 (QEPSTPVESNMY) has biased composition (polar residues). A compositionally biased stretch (basic and acidic residues) spans 1702 to 1724 (KAERARKDREADEAFRKAAEADA). Low complexity-rich tracts occupy residues 1725–1736 (QKPAPAKKSWFG) and 1798–1809 (GPPSRTASGSSA). Residues 1810–1827 (APPPPASASPMMPPPSSR) are compositionally biased toward pro residues. Over residues 1852–1866 (IQRSVSTGAAVSTPP) the composition is skewed to polar residues.

It belongs to the SEC16 family.

The protein resides in the endoplasmic reticulum membrane. Its function is as follows. Involved in the initiation of assembly of the COPII coat required for the formation of transport vesicles from the endoplasmic reticulum (ER) and the selection of cargo molecules. Also involved in autophagy. In Aspergillus niger (strain ATCC MYA-4892 / CBS 513.88 / FGSC A1513), this protein is COPII coat assembly protein sec16 (sec16).